The primary structure comprises 361 residues: tRNA(Ile)-lysidine synthase (361 aa).

An ATP-binding site is contributed by serine 32–serine 37.

Belongs to the tRNA(Ile)-lysidine synthase family.

The protein localises to the cytoplasm. It carries out the reaction cytidine(34) in tRNA(Ile2) + L-lysine + ATP = lysidine(34) in tRNA(Ile2) + AMP + diphosphate + H(+). In terms of biological role, ligates lysine onto the cytidine present at position 34 of the AUA codon-specific tRNA(Ile) that contains the anticodon CAU, in an ATP-dependent manner. Cytidine is converted to lysidine, thus changing the amino acid specificity of the tRNA from methionine to isoleucine. This Bradyrhizobium diazoefficiens (strain JCM 10833 / BCRC 13528 / IAM 13628 / NBRC 14792 / USDA 110) protein is tRNA(Ile)-lysidine synthase.